The chain runs to 99 residues: UPF0473 protein SMU_2077c (99 aa).

This sequence belongs to the UPF0473 family.

The chain is UPF0473 protein SMU_2077c from Streptococcus mutans serotype c (strain ATCC 700610 / UA159).